The primary structure comprises 110 residues: MILVTTTPSVDGYTITNYQGIVFGEVVSGVNMFKDLGAGLRNMFGGRSQGYEEELMRARNEAIAEMQQRAEAMGAHAVVGVDIDYEVLGADNGMLMVTASGTAVQIARTA.

This sequence belongs to the UPF0145 family.

This is UPF0145 protein BLD_1357 from Bifidobacterium longum (strain DJO10A).